Here is a 286-residue protein sequence, read N- to C-terminus: Myb family transcription factor PHL7 (286 aa).

Positions 12–72 (HASKQRLRWT…HLQKYRLAKY (61 aa)) constitute an HTH myb-type domain. Residues 43–68 (PKGVLRVMGVQGLTIYHVKSHLQKYR) constitute a DNA-binding region (H-T-H motif). Residues 74–97 (PDSSSEGKKTDKKESGDMLSGLDG) form a disordered region. Residues 78-89 (SEGKKTDKKESG) are compositionally biased toward basic and acidic residues. The stretch at 104–124 (TEALKLQMEVQKRLHEQLEVQ) forms a coiled coil. The short motif at 117–122 (LHEQLE) is the LHEQLE element. The tract at residues 152–227 (LGEPSAPVTG…TGEERLSKKP (76 aa)) is disordered.

Belongs to the MYB-CC family.

The protein localises to the nucleus. The chain is Myb family transcription factor PHL7 from Arabidopsis thaliana (Mouse-ear cress).